Here is a 28-residue protein sequence, read N- to C-terminus: Conotoxin Vi14b (28 aa).

2 disulfide bridges follow: cysteine 4/cysteine 21 and cysteine 7/cysteine 18. An N6-acetyllysine mark is found at lysine 15 and lysine 25.

The two N6-acetyllysines at position 15 and 25 have been deduced from the mass difference of 42. They are not common in venom proteins. In terms of tissue distribution, expressed by the venom gland.

It localises to the secreted. In terms of biological role, in vitro, inhibits proliferation of the mice ovarian cancer cells ID8. This Conus virgo (Virgin cone) protein is Conotoxin Vi14b.